We begin with the raw amino-acid sequence, 448 residues long: Glutamyl-tRNA reductase (448 aa).

Substrate-binding positions include 49 to 52 (TCNR), S109, 114 to 116 (ETQ), and Q120. C50 (nucleophile) is an active-site residue. Position 189-194 (189-194 (GAGEMS)) interacts with NADP(+).

This sequence belongs to the glutamyl-tRNA reductase family. In terms of assembly, homodimer.

The catalysed reaction is (S)-4-amino-5-oxopentanoate + tRNA(Glu) + NADP(+) = L-glutamyl-tRNA(Glu) + NADPH + H(+). It participates in porphyrin-containing compound metabolism; protoporphyrin-IX biosynthesis; 5-aminolevulinate from L-glutamyl-tRNA(Glu): step 1/2. Functionally, catalyzes the NADPH-dependent reduction of glutamyl-tRNA(Glu) to glutamate 1-semialdehyde (GSA). This Staphylococcus haemolyticus (strain JCSC1435) protein is Glutamyl-tRNA reductase.